The following is a 190-amino-acid chain: Peptidyl-tRNA hydrolase (190 aa).

Position 14 (tyrosine 14) interacts with tRNA. Histidine 19 serves as the catalytic Proton acceptor. Residues tyrosine 64 and asparagine 66 each contribute to the tRNA site.

This sequence belongs to the PTH family. As to quaternary structure, monomer.

The protein resides in the cytoplasm. It carries out the reaction an N-acyl-L-alpha-aminoacyl-tRNA + H2O = an N-acyl-L-amino acid + a tRNA + H(+). In terms of biological role, hydrolyzes ribosome-free peptidyl-tRNAs (with 1 or more amino acids incorporated), which drop off the ribosome during protein synthesis, or as a result of ribosome stalling. Functionally, catalyzes the release of premature peptidyl moieties from peptidyl-tRNA molecules trapped in stalled 50S ribosomal subunits, and thus maintains levels of free tRNAs and 50S ribosomes. This is Peptidyl-tRNA hydrolase from Rhodopirellula baltica (strain DSM 10527 / NCIMB 13988 / SH1).